The chain runs to 60 residues: Lantibiotic Pep5 (60 aa).

Positions 1–26 (MKNNKNLFDLEIKKETSQNTDELEPQ) are excised as a propeptide. The tract at residues 1–29 (MKNNKNLFDLEIKKETSQNTDELEPQTAG) is disordered. A 2-oxobutanoic acid modification is found at Thr27. The segment at residues 35-39 (SVKQC) is a cross-link (lanthionine (Ser-Cys)). 2,3-didehydrobutyrine occurs at positions 42 and 46. The beta-methyllanthionine (Thr-Cys) cross-link spans 50-53 (TVSC). Residues 52–59 (SCKGKNGC) constitute a cross-link (lanthionine (Ser-Cys)).

The protein belongs to the type A lantibiotic family. In terms of processing, maturation of lantibiotics involves the enzymatic conversion of Thr, and Ser into dehydrated AA and the formation of thioether bonds with cysteine. This is followed by membrane translocation and cleavage of the modified precursor. Post-translationally, after proteolysis of the propeptide, the N-terminal 2,3-didehydrobutyrine hydrolyzes to 2-oxobutanoic acid, possibly spontaneously.

Its function is as follows. Lanthionine-containing peptide antibiotic (lantibiotic) active on Gram-positive bacteria. The bactericidal activity of lantibiotics is based on depolarization of energized bacterial cytoplasmic membranes, initiated by the formation of aqueous transmembrane pores. The chain is Lantibiotic Pep5 (pepA) from Staphylococcus epidermidis.